The following is a 1390-amino-acid chain: Nuclear pore complex protein Nup155 (1390 aa).

An O-linked (GlcNAc) serine glycan is attached at S525. Residues 598 to 632 form a disordered region; the sequence is GSPMYSSSPVPTGSPYPNPSSLGTPSHGAQPPTMS. A Glycyl lysine isopeptide (Lys-Gly) (interchain with G-Cter in SUMO2) cross-link involves residue K739. The segment at 984-1011 is disordered; it reads QSKAAPQSPSVPKKPGPPVLSSDPNMLS. S1056 carries the phosphoserine modification.

Belongs to the non-repetitive/WGA-negative nucleoporin family. As to quaternary structure, interacts with GLE1. Able to form a heterotrimer with GLE1 and NUP42 in vitro. Forms a complex with NUP35, NUP93, NUP205 and lamin B. Phosphorylated. Phosphorylation and dephosphorylation may be important for the function of NUP155 and may play a role in the reversible disassembly of the nuclear pore complex during mitosis. Post-translationally, disulfide-linked to NUP62. The inner channel of the NPC has a different redox environment from the cytoplasm and allows the formation of interchain disulfide bonds between some nucleoporins, the significant increase of these linkages upon oxidative stress reduces the permeability of the NPC.

It is found in the nucleus. It localises to the nuclear pore complex. Its subcellular location is the nucleus membrane. Functionally, essential component of nuclear pore complex. Could be essessential for embryogenesis. Nucleoporins may be involved both in binding and translocating proteins during nucleocytoplasmic transport. In Rattus norvegicus (Rat), this protein is Nuclear pore complex protein Nup155 (Nup155).